We begin with the raw amino-acid sequence, 876 residues long: DNA mismatch repair protein MutS (876 aa).

626-633 (GPNMAGKS) is an ATP binding site. The tract at residues 829 to 856 (FRAAPPPPAPAAPPKASQVEERLRAIQP) is disordered. Over residues 832–841 (APPPPAPAAP) the composition is skewed to pro residues.

This sequence belongs to the DNA mismatch repair MutS family.

In terms of biological role, this protein is involved in the repair of mismatches in DNA. It is possible that it carries out the mismatch recognition step. This protein has a weak ATPase activity. The polypeptide is DNA mismatch repair protein MutS (Cereibacter sphaeroides (strain ATCC 17025 / ATH 2.4.3) (Rhodobacter sphaeroides)).